Consider the following 485-residue polypeptide: Glutamyl-tRNA(Gln) amidotransferase subunit A (485 aa).

Active-site charge relay system residues include Lys-79 and Ser-154. Ser-178 acts as the Acyl-ester intermediate in catalysis.

The protein belongs to the amidase family. GatA subfamily. Heterotrimer of A, B and C subunits.

The enzyme catalyses L-glutamyl-tRNA(Gln) + L-glutamine + ATP + H2O = L-glutaminyl-tRNA(Gln) + L-glutamate + ADP + phosphate + H(+). Its function is as follows. Allows the formation of correctly charged Gln-tRNA(Gln) through the transamidation of misacylated Glu-tRNA(Gln) in organisms which lack glutaminyl-tRNA synthetase. The reaction takes place in the presence of glutamine and ATP through an activated gamma-phospho-Glu-tRNA(Gln). The polypeptide is Glutamyl-tRNA(Gln) amidotransferase subunit A (Staphylococcus aureus (strain MW2)).